Reading from the N-terminus, the 505-residue chain is Deoxyguanosinetriphosphate triphosphohydrolase (505 aa).

Positions 66 to 273 constitute an HD domain; it reads RLTHSMEVQQ…MEAADDISYC (208 aa).

The protein belongs to the dGTPase family. Type 1 subfamily. In terms of assembly, homotetramer. It depends on Mg(2+) as a cofactor.

It carries out the reaction dGTP + H2O = 2'-deoxyguanosine + triphosphate + H(+). DGTPase preferentially hydrolyzes dGTP over the other canonical NTPs. The sequence is that of Deoxyguanosinetriphosphate triphosphohydrolase from Escherichia coli O7:K1 (strain IAI39 / ExPEC).